The sequence spans 398 residues: Succinate--CoA ligase [ADP-forming] subunit beta (398 aa).

One can recognise an ATP-grasp domain in the interval 9–254 (KAVLREFGVP…ESEEDAKEIE (246 aa)). ATP contacts are provided by residues Lys-46, 53–55 (GRG), Glu-109, Ser-112, and Glu-117. Mg(2+) contacts are provided by Asn-209 and Asp-223. Residues Asn-274 and 331 to 333 (GIM) contribute to the substrate site.

It belongs to the succinate/malate CoA ligase beta subunit family. Heterotetramer of two alpha and two beta subunits. Mg(2+) is required as a cofactor.

It carries out the reaction succinate + ATP + CoA = succinyl-CoA + ADP + phosphate. It catalyses the reaction GTP + succinate + CoA = succinyl-CoA + GDP + phosphate. The protein operates within carbohydrate metabolism; tricarboxylic acid cycle; succinate from succinyl-CoA (ligase route): step 1/1. Functionally, succinyl-CoA synthetase functions in the citric acid cycle (TCA), coupling the hydrolysis of succinyl-CoA to the synthesis of either ATP or GTP and thus represents the only step of substrate-level phosphorylation in the TCA. The beta subunit provides nucleotide specificity of the enzyme and binds the substrate succinate, while the binding sites for coenzyme A and phosphate are found in the alpha subunit. This Rhodopseudomonas palustris (strain HaA2) protein is Succinate--CoA ligase [ADP-forming] subunit beta.